The primary structure comprises 309 residues: MVKIYAPASIGNVSVGFDVLGAAVSPIDGTLLGDCVSVTAAERFSLHNEGRFVSKLPDDPKQNIVYQCWERFCQEMGKEIPVAMVLEKNMPIGSGLGSSACSVVAGLMAMNEFCGQPLDKVTLLGMMGELEGRVSGSIHFDNVAPCYLGGMQLILEQEGYISQDVPGFSDWLWVMAYPGIKVSTAEARAILPAQYRRQDCITHGRNLAGFIHACHTQQPDLAAKMMKDVIAEPYRTQLLPGFAAARQAAQDIGALACGISGSGPTLFAVCNDQATAQRMAGWLQNHYLQNDEGFVHICRLDTAGARLLG.

91–101 is an ATP binding site; it reads PIGSGLGSSAC.

Belongs to the GHMP kinase family. Homoserine kinase subfamily.

The protein resides in the cytoplasm. It carries out the reaction L-homoserine + ATP = O-phospho-L-homoserine + ADP + H(+). It functions in the pathway amino-acid biosynthesis; L-threonine biosynthesis; L-threonine from L-aspartate: step 4/5. In terms of biological role, catalyzes the ATP-dependent phosphorylation of L-homoserine to L-homoserine phosphate. This chain is Homoserine kinase, found in Yersinia pseudotuberculosis serotype O:1b (strain IP 31758).